The following is a 347-amino-acid chain: Selenide, water dikinase (347 aa).

Residue Cys17 is part of the active site. Residues Lys20 and 48–50 (TRD) each bind ATP. Asp51 contributes to the Mg(2+) binding site. Residues Asp68, Asp91, and 139–141 (GHS) contribute to the ATP site. Asp91 contacts Mg(2+). Residue Asp227 participates in Mg(2+) binding.

It belongs to the selenophosphate synthase 1 family. Class I subfamily. In terms of assembly, homodimer. Mg(2+) serves as cofactor.

It carries out the reaction hydrogenselenide + ATP + H2O = selenophosphate + AMP + phosphate + 2 H(+). Its function is as follows. Synthesizes selenophosphate from selenide and ATP. This chain is Selenide, water dikinase, found in Shigella flexneri serotype 5b (strain 8401).